A 511-amino-acid chain; its full sequence is Cytochrome P450 monooxygenase esdpI (511 aa).

A helical membrane pass occupies residues 14–34 (VRAGLAIGVAILAIIVLFPGI). C453 contributes to the heme binding site.

Belongs to the cytochrome P450 family. It depends on heme as a cofactor.

Its subcellular location is the membrane. It functions in the pathway secondary metabolite biosynthesis; terpenoid biosynthesis. Cytochrome P450 monooxygenase; part of the cluster that mediates the biosynthesis of shearones, diterpenoid pyrones (DPs) which are structurally diverse meroterpenoids consisting of a diterpene linked by a pyrone, and which may exhibit a range of bioactivities. Whitin the pathway, esdpI takes part in the molecular scaffold modification via the hydroxylation at C-20 and can transform shearone C into shearone G. The molecular scaffold is commonly biosynthesized by a series of enzymes including the non-reducing polyketide synthase (NR-PKS) esdpA that generates an alpha-pyrone; the prenyltransferase esdpC that attaches a geranylgeranyl pyrophosphate (GGPP) produced by the GGPP synthase (GGPPS) esdpD onto the pyrone unit; the FAD-dependent monooxygenase esdpE that converts an olefin on the diterpene unit into an epoxide; and the terpene cyclase esdpB that catalyzes the cyclization reactions to give the molecular backbone shearone A. In the modification steps, esdpF oxidizes the hydroxy group to a ketone at C-3 and esdpG then attaches hydroxy groups at both C-11 and C-12. After that, esdpI hydroxylates at C-20 and esdpH hydroxylates at C-6'. The ether bridge is generated by nucleophilic attack of the hydroxy group at C-20 to the carbonyl carbon at C-3. EsdpH can also functions prior to esdpI. The different combinations of these modification enzymes lead to the production of diverse shearone derivatives, shearone I being the end product of the pathway. The alpha-ketoglutarate-dependent dioxygenase esdpJ seems not to be involved in this pathway. The chain is Cytochrome P450 monooxygenase esdpI from Penicillium shearii (Eupenicillium shearii).